The primary structure comprises 191 residues: Large ribosomal subunit protein uL29m (191 aa).

It belongs to the universal ribosomal protein uL29 family. In terms of assembly, component of the mitochondrial large ribosomal subunit. Mature mitochondrial ribosomes consist of a small (37S) and a large (54S) subunit. The 37S subunit contains at least 33 different proteins and 1 molecule of RNA (15S). The 54S subunit contains at least 45 different proteins and 1 molecule of RNA (21S).

The protein localises to the mitochondrion. The chain is Large ribosomal subunit protein uL29m (MRPL4) from Sclerotinia sclerotiorum (strain ATCC 18683 / 1980 / Ss-1) (White mold).